A 524-amino-acid polypeptide reads, in one-letter code: Glutamyl-tRNA(Gln) amidotransferase subunit A (524 aa).

Residues K109 and S184 each act as charge relay system in the active site. The active-site Acyl-ester intermediate is the S208.

The protein belongs to the amidase family. GatA subfamily. Heterotrimer of A, B and C subunits.

The catalysed reaction is L-glutamyl-tRNA(Gln) + L-glutamine + ATP + H2O = L-glutaminyl-tRNA(Gln) + L-glutamate + ADP + phosphate + H(+). Functionally, allows the formation of correctly charged Gln-tRNA(Gln) through the transamidation of misacylated Glu-tRNA(Gln) in organisms which lack glutaminyl-tRNA synthetase. The reaction takes place in the presence of glutamine and ATP through an activated gamma-phospho-Glu-tRNA(Gln). The sequence is that of Glutamyl-tRNA(Gln) amidotransferase subunit A from Tropheryma whipplei (strain Twist) (Whipple's bacillus).